Consider the following 539-residue polypeptide: Chaperonin GroEL (539 aa).

ATP contacts are provided by residues 30–33, Lys51, 87–91, Gly415, 479–481, and Asp495; these read TLGP, DGTTT, and NAA.

This sequence belongs to the chaperonin (HSP60) family. In terms of assembly, forms a cylinder of 14 subunits composed of two heptameric rings stacked back-to-back. Interacts with the co-chaperonin GroES.

The protein localises to the cytoplasm. It carries out the reaction ATP + H2O + a folded polypeptide = ADP + phosphate + an unfolded polypeptide.. Its function is as follows. Together with its co-chaperonin GroES, plays an essential role in assisting protein folding. The GroEL-GroES system forms a nano-cage that allows encapsulation of the non-native substrate proteins and provides a physical environment optimized to promote and accelerate protein folding. The protein is Chaperonin GroEL of Enterobacter agglomerans (Erwinia herbicola).